A 340-amino-acid chain; its full sequence is MKVTLLGAGAWGMAMAAQATRHLQEGDVCLWSRSKEQLLDIQESGENRAYLSGIKLPEGLKLEGDFSAAVKRLSIDDLLVIATPMSGLSETIAQVLRVAEHPLNIIWLCKGLEPNTALLPHQVVERESKIHSHGITHSYGALSGPSFAREVGVGMPCALTVASKSPKLCEVVQAAFHHGNMRVYSSDDLIGVELGGAIKNVLAIAAGIGDGLDLGLNARAAVLTRGLAEMMRLVKAAGGKSETCMGLTGVGDLILTATGDLSRNRRVGLELAAGKSLPEILASLGHVAEGVLCAQAVGDLAKRLGIEMPITAMMDEVLSGKLKPHDAVKKLMGRDPKIES.

Trp11, Arg33, and Lys110 together coordinate NADPH. Residues Lys110, Gly144, and Ser146 each coordinate sn-glycerol 3-phosphate. Residue Ala148 participates in NADPH binding. Residues Lys199, Asp252, Ser262, Arg263, and Asn264 each coordinate sn-glycerol 3-phosphate. Residue Lys199 is the Proton acceptor of the active site. Residue Arg263 coordinates NADPH. Residues Val287 and Glu289 each coordinate NADPH.

The protein belongs to the NAD-dependent glycerol-3-phosphate dehydrogenase family.

Its subcellular location is the cytoplasm. The catalysed reaction is sn-glycerol 3-phosphate + NAD(+) = dihydroxyacetone phosphate + NADH + H(+). The enzyme catalyses sn-glycerol 3-phosphate + NADP(+) = dihydroxyacetone phosphate + NADPH + H(+). It participates in membrane lipid metabolism; glycerophospholipid metabolism. Functionally, catalyzes the reduction of the glycolytic intermediate dihydroxyacetone phosphate (DHAP) to sn-glycerol 3-phosphate (G3P), the key precursor for phospholipid synthesis. This chain is Glycerol-3-phosphate dehydrogenase [NAD(P)+], found in Polynucleobacter necessarius subsp. necessarius (strain STIR1).